A 380-amino-acid polypeptide reads, in one-letter code: Alpha-N-acetylneuraminate alpha-2,8-sialyltransferase ST8SIA3 (380 aa).

At 1 to 17 the chain is on the cytoplasmic side; sequence MRNCKMARVASVLGLVM. The chain crosses the membrane as a helical; Signal-anchor for type II membrane protein span at residues 18–33; that stretch reads LSVALLILSLISYVSL. Residues 34–380 are Lumenal-facing; that stretch reads KKENIFTTPK…LTKLTLSHCA (347 aa). Residues asparagine 93 and asparagine 113 are each glycosylated (N-linked (GlcNAc...) asparagine). Cystine bridges form between cysteine 162/cysteine 313 and cysteine 176/cysteine 379. CMP-N-acetyl-beta-neuraminate is bound by residues asparagine 167 and asparagine 190. Asparagine 206 carries N-linked (GlcNAc...) asparagine glycosylation. CMP-N-acetyl-beta-neuraminate contacts are provided by serine 300, threonine 301, glycine 302, tryptophan 322, tyrosine 336, and histidine 337. Histidine 354 functions as the Proton donor/acceptor in the catalytic mechanism.

It belongs to the glycosyltransferase 29 family. Homodimer. Expressed in neurons in brain with higher expression in the striatum than in the hippocampus, cortex, and cerebellum (at protein level). Expressed in testes.

It localises to the golgi apparatus membrane. The enzyme catalyses a ganglioside GM3 (d18:1(4E)) + CMP-N-acetyl-beta-neuraminate = a ganglioside GD3 (d18:1(4E)) + CMP + H(+). The catalysed reaction is a ganglioside GM3 + CMP-N-acetyl-beta-neuraminate = a ganglioside GD3 + CMP + H(+). It catalyses the reaction an N-acetyl-alpha-neuraminyl-(2-&gt;3)-beta-D-galactosyl derivative + CMP-N-acetyl-beta-neuraminate = an N-acetyl-alpha-neuraminyl-(2-&gt;8)-N-acetyl-alpha-neuraminyl-(2-&gt;3)-beta-D-galactosyl derivative + CMP + H(+). It carries out the reaction an N-acetyl-alpha-neuraminyl-(2-&gt;3)-beta-D-galactosyl-(1-&gt;4)-N-acetyl-beta-D-glucosaminyl derivative + CMP-N-acetyl-beta-neuraminate = an alpha-Neu5Ac-(2-&gt;8)-alpha-Neu5Ac-(2-&gt;3)-beta-D-Gal-(1-&gt;4)-beta-D-GlcNAc derivative + CMP + H(+). It functions in the pathway protein modification; protein glycosylation. In terms of biological role, catalyzes the transfer of sialic acid from a CMP-linked sialic acid donor onto a terminal alpha-2,3-, alpha-2,6-, or alpha-2,8-linked sialic acid of an acceptor, such as N-linked oligosaccharides of glycoproteins and glycolipids through alpha-2,8-linkages. Forms oligosialic and polysialic acid on various sialylated N-acetyllactosamine oligosaccharides of glycoproteins, including FETUB N-glycans, a2-HS-glycoprotein (AHSG) and alpha 2,3-sialylated glycosphingolipids, such as alpha 2,3-sialylparagloboside and ganglioside GM3 and to a lesser extent NCAM1 N-glycans. However, it is much more specific to N-linked oligosaccharides of glycoproteins than glycosphingolipids. 2,3-sialylparagloboside served as the best acceptor substrate among the glycolipids. alpha-Neu5Ac-(2-&gt;8)-alpha-Neu5Ac-(2-&gt;3)-beta-D-Gal-(1-&gt;4)-6S-D-GlcNAc and monosialyl and disialyl N-acetyllactosamines are the best acceptor substrates among glycoproteins. May play critical role in the striatum by mediating the formation of disialylated and trisialylated terminal glycotopes on N- and O-glycans of specific striatal proteins, regulating their distribution in lipid rafts, affecting their interaction with other binding partners, and subsequently modulating striatal functions. This Mus musculus (Mouse) protein is Alpha-N-acetylneuraminate alpha-2,8-sialyltransferase ST8SIA3.